The primary structure comprises 179 residues: NEDD8-conjugating enzyme UBC12 (179 aa).

Residues 24-168 enclose the UBC core domain; it reads AAQLRVQKDL…VKHSMAGGSV (145 aa). Cys-106 acts as the Glycyl thioester intermediate in catalysis.

Belongs to the ubiquitin-conjugating enzyme family. UBC12 subfamily.

The enzyme catalyses [E1 NEDD8-activating enzyme]-S-[NEDD8 protein]-yl-L-cysteine + [E2 NEDD8-conjugating enzyme]-L-cysteine = [E1 NEDD8-activating enzyme]-L-cysteine + [E2 NEDD8-conjugating enzyme]-S-[NEDD8-protein]-yl-L-cysteine.. It functions in the pathway protein modification; protein neddylation. Its function is as follows. Accepts the ubiquitin-like protein NEDD8/RUB1 from the UBA3-ULA1 E1 complex and catalyzes its covalent attachment to other proteins. This is NEDD8-conjugating enzyme UBC12 (UBC12) from Yarrowia lipolytica (strain CLIB 122 / E 150) (Yeast).